Here is a 272-residue protein sequence, read N- to C-terminus: Imidazole glycerol phosphate synthase subunit HisF (272 aa).

Residues D12 and D131 contribute to the active site.

Belongs to the HisA/HisF family. In terms of assembly, heterodimer of HisH and HisF.

Its subcellular location is the cytoplasm. The enzyme catalyses 5-[(5-phospho-1-deoxy-D-ribulos-1-ylimino)methylamino]-1-(5-phospho-beta-D-ribosyl)imidazole-4-carboxamide + L-glutamine = D-erythro-1-(imidazol-4-yl)glycerol 3-phosphate + 5-amino-1-(5-phospho-beta-D-ribosyl)imidazole-4-carboxamide + L-glutamate + H(+). It participates in amino-acid biosynthesis; L-histidine biosynthesis; L-histidine from 5-phospho-alpha-D-ribose 1-diphosphate: step 5/9. Its function is as follows. IGPS catalyzes the conversion of PRFAR and glutamine to IGP, AICAR and glutamate. The HisF subunit catalyzes the cyclization activity that produces IGP and AICAR from PRFAR using the ammonia provided by the HisH subunit. The chain is Imidazole glycerol phosphate synthase subunit HisF from Methanopyrus kandleri (strain AV19 / DSM 6324 / JCM 9639 / NBRC 100938).